A 395-amino-acid polypeptide reads, in one-letter code: Phosphoglycerate kinase (395 aa).

Residues 21 to 23 (DIN), Arg36, 59 to 62 (HFGR), Arg114, and Arg147 contribute to the substrate site. ATP contacts are provided by residues Lys197, Glu322, and 352-355 (GGDT).

The protein belongs to the phosphoglycerate kinase family. In terms of assembly, monomer.

Its subcellular location is the cytoplasm. The catalysed reaction is (2R)-3-phosphoglycerate + ATP = (2R)-3-phospho-glyceroyl phosphate + ADP. It participates in carbohydrate degradation; glycolysis; pyruvate from D-glyceraldehyde 3-phosphate: step 2/5. The protein is Phosphoglycerate kinase of Roseobacter denitrificans (strain ATCC 33942 / OCh 114) (Erythrobacter sp. (strain OCh 114)).